The following is a 328-amino-acid chain: Serine protease 27 (328 aa).

An N-terminal signal peptide occupies residues 1 to 22 (MRQPHITALLLLPLLLRSGTEG). Residues 23–37 (AEAMRACGHPRMFNR) constitute a propeptide, activation peptide. Residues 38–280 (MVGGEDALEG…HYQWIHQIIP (243 aa)) enclose the Peptidase S1 domain. Residues Cys-63 and Cys-79 are joined by a disulfide bond. His-78 acts as the Charge relay system in catalysis. An N-linked (GlcNAc...) asparagine glycan is attached at Asn-82. Asp-127 serves as the catalytic Charge relay system. Disulfide bonds link Cys-161/Cys-238, Cys-194/Cys-217, and Cys-228/Cys-256. Ser-232 acts as the Charge relay system in catalysis.

The protein belongs to the peptidase S1 family.

It is found in the secreted. The chain is Serine protease 27 (Prss27) from Rattus norvegicus (Rat).